The sequence spans 522 residues: Peptide chain release factor 3 (522 aa).

In terms of domain architecture, tr-type G spans 10–277 (ASRKTFAIIS…TFVDFAPSPS (268 aa)). GTP is bound by residues 19–26 (SHPDAGKT), 87–91 (DTPGH), and 141–144 (NKMD).

The protein belongs to the TRAFAC class translation factor GTPase superfamily. Classic translation factor GTPase family. PrfC subfamily.

It is found in the cytoplasm. Increases the formation of ribosomal termination complexes and stimulates activities of RF-1 and RF-2. It binds guanine nucleotides and has strong preference for UGA stop codons. It may interact directly with the ribosome. The stimulation of RF-1 and RF-2 is significantly reduced by GTP and GDP, but not by GMP. This is Peptide chain release factor 3 from Listeria monocytogenes serotype 4b (strain CLIP80459).